Reading from the N-terminus, the 398-residue chain is Cysteine protease ATG4A (398 aa).

The active-site Nucleophile is the Cys77. Residues Asp279 and His281 contribute to the active site. The short motif at 393-396 (FEIL) is the LIR element.

The protein belongs to the peptidase C54 family. Interacts with ATG9A; the interaction is direct.

It localises to the cytoplasm. The enzyme catalyses [protein]-C-terminal L-amino acid-glycyl-phosphatidylethanolamide + H2O = [protein]-C-terminal L-amino acid-glycine + a 1,2-diacyl-sn-glycero-3-phosphoethanolamine. With respect to regulation, inhibited by N-ethylmaleimide. Redox-regulated during autophagy since reducing conditions activate ATG4A whereas an oxidizing environment such as the presence of H(2)O(2) inhibits its activity. In terms of biological role, cysteine protease that plays a key role in autophagy by mediating both proteolytic activation and delipidation of ATG8 family proteins. The protease activity is required for proteolytic activation of ATG8 family proteins: cleaves the C-terminal amino acid of ATG8 proteins to reveal a C-terminal glycine. Exposure of the glycine at the C-terminus is essential for ATG8 proteins conjugation to phosphatidylethanolamine (PE) and insertion to membranes, which is necessary for autophagy. Preferred substrate is GABARAPL2 followed by MAP1LC3A and GABARAP. Protease activity is also required to counteract formation of high-molecular weight conjugates of ATG8 proteins (ATG8ylation): acts as a deubiquitinating-like enzyme that removes ATG8 conjugated to other proteins, such as ATG3. In addition to the protease activity, also mediates delipidation of ATG8 family proteins. Catalyzes delipidation of PE-conjugated forms of ATG8 proteins during macroautophagy. Compared to ATG4B, the major protein for proteolytic activation of ATG8 proteins, shows weaker ability to cleave the C-terminal amino acid of ATG8 proteins, while it displays stronger delipidation activity. Involved in phagophore growth during mitophagy independently of its protease activity and of ATG8 proteins: acts by regulating ATG9A trafficking to mitochondria and promoting phagophore-endoplasmic reticulum contacts during the lipid transfer phase of mitophagy. The protein is Cysteine protease ATG4A of Homo sapiens (Human).